The chain runs to 327 residues: GDP-mannose transporter (327 aa).

Residues 1 to 4 (MESS) lie on the Cytoplasmic side of the membrane. A helical membrane pass occupies residues 5-25 (LAAIANSGPISIFSYCVSSIL). At 26 to 36 (MTVTNKYVLSG) the chain is on the lumenal side. Residues 37–57 (FSFNMNFLLLAVQSIVCIVTI) form a helical membrane-spanning segment. The Cytoplasmic segment spans residues 58 to 78 (GSLKSFGVITYRQFNKEEARK). The chain crosses the membrane as a helical span at residues 79–93 (WSPIAVLLVIMIYTS). At 94–102 (SKALQYLSI) the chain is on the lumenal side. A helical transmembrane segment spans residues 103–125 (PVYTIFKNLTIILIAYGEVLWFG). The Cytoplasmic portion of the chain corresponds to 126 to 131 (GKVTTM). A helical transmembrane segment spans residues 132 to 149 (ALSSFLLMVFSSVVAWYG). Residues 150 to 163 (DEAVSGSGNESFIA) are Lumenal-facing. Asparagine 158 is a glycosylation site (N-linked (GlcNAc...) asparagine). The helical transmembrane segment at 164–184 (LYLGYFWMATNCFASAAFVLI) threads the bilayer. Over 185–207 (MRKRIKLTNFKDFDTMYYNNLLS) the chain is Cytoplasmic. Residues 208-228 (IPILLASSIIFEDWSAENLAV) traverse the membrane as a helical segment. The Lumenal segment spans residues 229–238 (NFPSDNRTAT). The N-linked (GlcNAc...) asparagine glycan is linked to asparagine 234. A helical transmembrane segment spans residues 239–259 (IAAMVLSGASSVGISYCSAWC). At 260–266 (VRVTSST) the chain is on the cytoplasmic side. The helical transmembrane segment at 267 to 289 (TYSMVGALNKLPIALSGLVFFPA) threads the bilayer. Topologically, residues 290–292 (AVN) are lumenal. Residues 293-312 (FWSVASIFVGFAAGLVYAVA) form a helical membrane-spanning segment. Over 313-327 (KQRQQKENVSLPSSK) the chain is Cytoplasmic.

This sequence belongs to the TPT transporter family. SLC35D subfamily. As to quaternary structure, homooligomer.

The protein resides in the golgi apparatus membrane. Its subcellular location is the cytoplasmic vesicle membrane. The protein localises to the endoplasmic reticulum membrane. In terms of biological role, involved in the import of GDP-mannose from the cytoplasm into the Golgi lumen. The protein is GDP-mannose transporter (VRG4) of Scheffersomyces stipitis (strain ATCC 58785 / CBS 6054 / NBRC 10063 / NRRL Y-11545) (Yeast).